A 362-amino-acid chain; its full sequence is Probable choline-phosphate cytidylyltransferase (362 aa).

Over residues 1 to 37 (MGEEGIKINDTHKRRIDEVEPSEKEDNVERQTKKYNF) the composition is skewed to basic and acidic residues. The tract at residues 1–79 (MGEEGIKIND…VSPVEEEPRD (79 aa)) is disordered. CTP contacts are provided by residues 109–117 (VFDLFHIGH) and K147. Residues K147 and W176 each coordinate substrate. Residues 193 to 194 (HD), Y198, and 221 to 225 (RTEGV) each bind CTP. Residues 308-362 (KNPLHGSSEPSSPGPTGFLGGINRWMQRRSSSHYDLPRVGNEIAASSSSATEENH) form a disordered region. 2 stretches are compositionally biased toward low complexity: residues 313-323 (GSSEPSSPGPT) and 351-362 (AASSSSATEENH). S315 and S319 each carry phosphoserine. T323 carries the post-translational modification Phosphothreonine. A Phosphoserine modification is found at S355.

It belongs to the cytidylyltransferase family.

The protein localises to the nucleus. The catalysed reaction is phosphocholine + CTP + H(+) = CDP-choline + diphosphate. This is Probable choline-phosphate cytidylyltransferase from Schizosaccharomyces pombe (strain 972 / ATCC 24843) (Fission yeast).